The chain runs to 338 residues: Ketol-acid reductoisomerase (NADP(+)) (338 aa).

The 181-residue stretch at 1–181 folds into the KARI N-terminal Rossmann domain; that stretch reads MNVFYDKDAD…GGGRAGIIET (181 aa). NADP(+) contacts are provided by residues 24–27, R47, and S52; that span reads YGSQ. H107 is an active-site residue. Residue G133 coordinates NADP(+). In terms of domain architecture, KARI C-terminal knotted spans 182-327; sequence NFREETETDL…AKLRAMMPWI (146 aa). 4 residues coordinate Mg(2+): D190, E194, E226, and E230. S251 provides a ligand contact to substrate.

Belongs to the ketol-acid reductoisomerase family. Mg(2+) serves as cofactor.

The enzyme catalyses (2R)-2,3-dihydroxy-3-methylbutanoate + NADP(+) = (2S)-2-acetolactate + NADPH + H(+). The catalysed reaction is (2R,3R)-2,3-dihydroxy-3-methylpentanoate + NADP(+) = (S)-2-ethyl-2-hydroxy-3-oxobutanoate + NADPH + H(+). It functions in the pathway amino-acid biosynthesis; L-isoleucine biosynthesis; L-isoleucine from 2-oxobutanoate: step 2/4. The protein operates within amino-acid biosynthesis; L-valine biosynthesis; L-valine from pyruvate: step 2/4. Involved in the biosynthesis of branched-chain amino acids (BCAA). Catalyzes an alkyl-migration followed by a ketol-acid reduction of (S)-2-acetolactate (S2AL) to yield (R)-2,3-dihydroxy-isovalerate. In the isomerase reaction, S2AL is rearranged via a Mg-dependent methyl migration to produce 3-hydroxy-3-methyl-2-ketobutyrate (HMKB). In the reductase reaction, this 2-ketoacid undergoes a metal-dependent reduction by NADPH to yield (R)-2,3-dihydroxy-isovalerate. The chain is Ketol-acid reductoisomerase (NADP(+)) from Burkholderia cenocepacia (strain ATCC BAA-245 / DSM 16553 / LMG 16656 / NCTC 13227 / J2315 / CF5610) (Burkholderia cepacia (strain J2315)).